Consider the following 239-residue polypeptide: Large ribosomal subunit protein uL30 (239 aa).

The segment at 1–22 (MEGVMSEAPQSSIRKKEYEARM) is disordered.

This sequence belongs to the universal ribosomal protein uL30 family.

The sequence is that of Large ribosomal subunit protein uL30 (RPL7) from Encephalitozoon cuniculi (strain GB-M1) (Microsporidian parasite).